Here is a 316-residue protein sequence, read N- to C-terminus: Biotin synthase (316 aa).

Positions 38–266 (YKGKKIELCA…DKDIRVCGGR (229 aa)) constitute a Radical SAM core domain. [4Fe-4S] cluster is bound by residues cysteine 56, cysteine 60, and cysteine 63. [2Fe-2S] cluster contacts are provided by serine 100, cysteine 131, cysteine 191, and arginine 261.

This sequence belongs to the radical SAM superfamily. Biotin synthase family. As to quaternary structure, homodimer. The cofactor is [4Fe-4S] cluster. [2Fe-2S] cluster is required as a cofactor.

It carries out the reaction (4R,5S)-dethiobiotin + (sulfur carrier)-SH + 2 reduced [2Fe-2S]-[ferredoxin] + 2 S-adenosyl-L-methionine = (sulfur carrier)-H + biotin + 2 5'-deoxyadenosine + 2 L-methionine + 2 oxidized [2Fe-2S]-[ferredoxin]. It participates in cofactor biosynthesis; biotin biosynthesis; biotin from 7,8-diaminononanoate: step 2/2. Its function is as follows. Catalyzes the conversion of dethiobiotin (DTB) to biotin by the insertion of a sulfur atom into dethiobiotin via a radical-based mechanism. In Thermodesulfovibrio yellowstonii (strain ATCC 51303 / DSM 11347 / YP87), this protein is Biotin synthase.